Reading from the N-terminus, the 3432-residue chain is Hybrid signal transduction histidine kinase G (3432 aa).

3 stretches are compositionally biased toward low complexity: residues 44–68 (HFSN…TTTN), 76–90 (SQLQ…QQNN), and 126–145 (QPQQ…SQKQ). Disordered regions lie at residues 44–109 (HFSN…TNSS) and 124–240 (DDQP…HNIN). Residues 146-157 (TSQLNISGNNSG) are compositionally biased toward polar residues. 2 stretches are compositionally biased toward low complexity: residues 165–177 (TISN…NFIH) and 187–238 (KTPI…NNHN). The region spanning 263–792 (LSFKHGYNSG…YGLKKDLEMF (530 aa)) is the Protein kinase domain. Residues 269-277 (YNSGLGGNF) and K305 contribute to the ATP site. Over residues 399–419 (NNNNNNNNSYNNNYNNNNNNN) the composition is skewed to low complexity. 2 disordered regions span residues 399–426 (NNNN…TSPI) and 443–542 (FQLN…STPL). Residues 443–467 (FQLNSSTNSTGSPLIITSQPMPFQL) show a composition bias toward polar residues. Low complexity predominate over residues 468 to 479 (NSNSNTTASSSS). Residues 480-490 (PITHSNLNTAI) show a composition bias toward polar residues. A compositionally biased stretch (low complexity) spans 491–508 (TSTTTSNSNSNNNSNNNN). Gly residues predominate over residues 509-525 (SGGGGGGGGGGGGGGGT). D585 (proton acceptor; for protein kinase activity) is an active-site residue. The interval 863–1121 (GKEFIIVSGL…TMKIVLKNLD (259 aa)) is AAA. 871 to 878 (GLSGVGKT) contacts ATP. Disordered regions lie at residues 1040–1077 (NNFS…NNNI) and 1261–1290 (TTTT…NNSD). The span at 1261 to 1288 (TTTTNNNTTNNTNNNNTNNNNNNTNGNN) shows a compositional bias: low complexity. 2 consecutive transmembrane segments (helical) span residues 1567–1587 (VMVI…TLLL) and 1599–1619 (ISSW…IGHF). A TPR repeat occupies 1965–1998 (SQLMLAKAEFERINGNFEQAMEYFSEAISLAQQF). 2 disordered regions span residues 2071–2095 (EYSN…QASI) and 2299–2349 (GYNN…NNNK). A compositionally biased stretch (low complexity) spans 2073–2095 (SNNNNNNNSNNNNNNANQSQASI). A GAF domain is found at 2215 to 2465 (YFDRLLKRLM…SNARLFIKVN (251 aa)). Positions 2491-2769 (NMSHEMRTPL…TFHFCVELGK (279 aa)) constitute a Histidine kinase domain. At H2494 the chain carries Phosphohistidine; by autocatalysis. Residues 2637-2648 (TTTNNKKQLNTD) show a composition bias toward low complexity. Disordered stretches follow at residues 2637–2673 (TTTN…SIDL), 2785–2815 (LLNN…NNNN), 2917–3030 (LSPK…NNNS), 3134–3160 (NNNI…HSQY), and 3247–3281 (NSIS…TITT). The span at 2649–2673 (NDGDDDDDDDNENLDENNEDTSIDL) shows a compositional bias: acidic residues. Composition is skewed to low complexity over residues 2787–2815 (NNNN…NNNN), 2935–3029 (LSSS…HNNN), and 3134–3145 (NNNINNINNNNN). Positions 3305-3424 (KILIVEDNEM…DLRYVINRYG (120 aa)) constitute a Response regulatory domain. 4-aspartylphosphate is present on D3356.

Belongs to the protein kinase superfamily. Ser/Thr protein kinase family. Activation probably requires transfer of a phosphate group between a histidine in the kinase core (transmitter) domain and an aspartate of the receiver domain.

Its subcellular location is the membrane. The catalysed reaction is ATP + protein L-histidine = ADP + protein N-phospho-L-histidine.. It catalyses the reaction L-seryl-[protein] + ATP = O-phospho-L-seryl-[protein] + ADP + H(+). The enzyme catalyses L-threonyl-[protein] + ATP = O-phospho-L-threonyl-[protein] + ADP + H(+). Its function is as follows. Acts as a receptor histidine kinase for a signal transduction pathway. This protein undergoes an ATP-dependent autophosphorylation at a conserved histidine residue in the kinase core, and a phosphoryl group is then transferred to a conserved aspartate residue in the receiver domain. The polypeptide is Hybrid signal transduction histidine kinase G (dhkG) (Dictyostelium discoideum (Social amoeba)).